The chain runs to 620 residues: Sodium-dependent dopamine transporter (620 aa).

Over 1 to 56 the chain is Cytoplasmic; it reads MSKSKCSVGLMSSVVAPAKEPNAVGPKEVELILVKEQNGVQLTSSTLTNPRQSPVE. The chain crosses the membrane as a discontinuously helical span at residues 57-95; sequence AQDRETWGKKIDFLLSVIGFAVDLANVWRFPYLCYKNGG. Residues glycine 75, alanine 77, valine 78, aspartate 79, and asparagine 82 each contribute to the Na(+) site. Residue aspartate 79 participates in dopamine binding. 2 helical membrane passes run 96 to 127 and 128 to 171; these read GAFLVPYLLFMVIAGMPLFYMELALGQFNREG and AAGV…FSSF. Serine 149 and glycine 153 together coordinate dopamine. At 172-236 the chain is on the extracellular side; it reads TTELPWIHCN…SHGIDDLGPP (65 aa). A disulfide bond links cysteine 180 and cysteine 189. Asparagine 181, asparagine 188, and asparagine 205 each carry an N-linked (GlcNAc...) asparagine glycan. A run of 2 helical transmembrane segments spans residues 237-256 and 257-287; these read RWQLTACLVLVIVLLYFSLW and KGVKTSGKVVWITATMPYVVLTALLLRGVTL. At 288 to 306 the chain is on the extracellular side; the sequence is PGAIDGIRAYLSVDFYRLC. Residues 307–335 form a discontinuously helical membrane-spanning segment; sequence EASVWIDAATQVCFSLGVGFGVLIAFSSY. Glutamine 317 serves as a coordination point for chloride. Phenylalanine 320 serves as a coordination point for dopamine. Positions 321 and 353 each coordinate Na(+). Position 321 (serine 321) interacts with chloride. The chain crosses the membrane as a helical span at residues 336–376; it reads NKFTNNCYRDAIVTTSINSLTSFSSGFVVFSFLGYMAQKHS. A chloride-binding site is contributed by serine 357. Topologically, residues 377–400 are extracellular; the sequence is VPIGDVAKDGPGLIFIIYPEAIAT. A run of 3 helical transmembrane segments spans residues 401 to 442, 443 to 466, and 467 to 499; these read LPLS…QLLH, RHRELFTLFIVLATFLLSLFCVTN, and GGIYVFTLLDHFAAGTSILFGVLIEAIGVAWFY. Residues leucine 418, aspartate 421, and serine 422 each contribute to the Na(+) site. Dopamine contacts are provided by serine 422 and alanine 423. The Cytoplasmic segment spans residues 500-516; the sequence is GVGQFSDDIQQMTGQRP. Residues 517–542 traverse the membrane as a helical segment; the sequence is SLYWRLCWKLVSPCFLLFVVVVSIVT. The Extracellular segment spans residues 543-553; the sequence is FRPPHYGAYIF. The chain crosses the membrane as a helical span at residues 554-583; sequence PDWANALGWVIATSSMAMVPIYAAYKFCSL. The interval 561–590 is interaction with TGFB1I1; it reads GWVIATSSMAMVPIYAAYKFCSLPGSFREK. Residues 584–620 lie on the Cytoplasmic side of the membrane; it reads PGSFREKLAYAIAPEKDRELVDRGEVRQFTLRHWLKV.

The protein belongs to the sodium:neurotransmitter symporter (SNF) (TC 2.A.22) family. SLC6A3 subfamily. As to quaternary structure, monomer. Homooligomer; disulfide-linked. Interacts with PRKCABP and TGFB1I1. Interacts (via N-terminus) with SYNGR3 (via N-terminus). Interacts with SLC18A2. Interacts with TOR1A (ATP-bound); TOR1A regulates SLC6A3 subcellular location. Interacts with alpha-synuclein/SNCA. Interacts with SEPTIN4. As to expression, highly expressed in substantia nigra. Expressed in axonal varicosities in dopaminergic nerve terminals (at protein level). Expressed in the striatum (at protein level).

It localises to the cell membrane. It is found in the cell projection. The protein localises to the neuron projection. Its subcellular location is the axon. The catalysed reaction is dopamine(out) + chloride(out) + Na(+)(out) = dopamine(in) + chloride(in) + Na(+)(in). It carries out the reaction dopamine(out) + chloride(out) + 2 Na(+)(out) = dopamine(in) + chloride(in) + 2 Na(+)(in). The enzyme catalyses (R)-noradrenaline(out) + chloride(out) + Na(+)(out) = (R)-noradrenaline(in) + chloride(in) + Na(+)(in). Its activity is regulated as follows. Inhibited by cocaine, which occupies the same binding site as dopamine. Inhibited by zinc ions. Enhanced by the antibiotic valinomycin. Inhibited by benztropine. Inhibited by GBR 12909 dihydrochloride and amphetamine. Inhibited by mazindol, GBR 12783 dihydrochloride, nomifensine, diclofensine, amfonelic acid, Lu 19005, Win-35428, bupropion and ritalin. Mediates sodium- and chloride-dependent transport of dopamine. Also mediates sodium- and chloride-dependent transport of norepinephrine (also known as noradrenaline). Regulator of light-dependent retinal hyaloid vessel regression, downstream of OPN5 signaling. The protein is Sodium-dependent dopamine transporter (SLC6A3) of Homo sapiens (Human).